Reading from the N-terminus, the 454-residue chain is UDP-N-acetylmuramoylalanine--D-glutamate ligase (454 aa).

Residue 115-121 (GTNGKTT) coordinates ATP.

It belongs to the MurCDEF family.

The protein resides in the cytoplasm. The catalysed reaction is UDP-N-acetyl-alpha-D-muramoyl-L-alanine + D-glutamate + ATP = UDP-N-acetyl-alpha-D-muramoyl-L-alanyl-D-glutamate + ADP + phosphate + H(+). The protein operates within cell wall biogenesis; peptidoglycan biosynthesis. Cell wall formation. Catalyzes the addition of glutamate to the nucleotide precursor UDP-N-acetylmuramoyl-L-alanine (UMA). This chain is UDP-N-acetylmuramoylalanine--D-glutamate ligase, found in Thermoanaerobacter sp. (strain X514).